Here is a 388-residue protein sequence, read N- to C-terminus: Chorismate synthase (388 aa).

NADP(+) is bound by residues Arg-39 and Arg-45. FMN-binding positions include 130–132, 251–252, Gly-296, 311–315, and Arg-337; these read RSS, NA, and KPIPT.

The protein belongs to the chorismate synthase family. In terms of assembly, homotetramer. It depends on FMNH2 as a cofactor.

It carries out the reaction 5-O-(1-carboxyvinyl)-3-phosphoshikimate = chorismate + phosphate. It functions in the pathway metabolic intermediate biosynthesis; chorismate biosynthesis; chorismate from D-erythrose 4-phosphate and phosphoenolpyruvate: step 7/7. In terms of biological role, catalyzes the anti-1,4-elimination of the C-3 phosphate and the C-6 proR hydrogen from 5-enolpyruvylshikimate-3-phosphate (EPSP) to yield chorismate, which is the branch point compound that serves as the starting substrate for the three terminal pathways of aromatic amino acid biosynthesis. This reaction introduces a second double bond into the aromatic ring system. In Streptococcus pyogenes serotype M5 (strain Manfredo), this protein is Chorismate synthase.